A 91-amino-acid polypeptide reads, in one-letter code: Elongation factor 1-beta (91 aa).

The protein belongs to the EF-1-beta/EF-1-delta family.

Promotes the exchange of GDP for GTP in EF-1-alpha/GDP, thus allowing the regeneration of EF-1-alpha/GTP that could then be used to form the ternary complex EF-1-alpha/GTP/AAtRNA. In Pyrococcus horikoshii (strain ATCC 700860 / DSM 12428 / JCM 9974 / NBRC 100139 / OT-3), this protein is Elongation factor 1-beta (ef1b).